Reading from the N-terminus, the 313-residue chain is D-alanine--D-alanine ligase (313 aa).

An ATP-grasp domain is found at 108–308 (KLVWQQTGVP…YSELVVKVLS (201 aa)). An ATP-binding site is contributed by 138-193 (VAKLGLPLFVKPASEGSSVAVLKVKTADALPAALSEAATHDKIVIVEKSIEGGGEY). Positions 262, 275, and 277 each coordinate Mg(2+).

Belongs to the D-alanine--D-alanine ligase family. It depends on Mg(2+) as a cofactor. Mn(2+) serves as cofactor.

Its subcellular location is the cytoplasm. The enzyme catalyses 2 D-alanine + ATP = D-alanyl-D-alanine + ADP + phosphate + H(+). The protein operates within cell wall biogenesis; peptidoglycan biosynthesis. Cell wall formation. This chain is D-alanine--D-alanine ligase, found in Burkholderia vietnamiensis (strain G4 / LMG 22486) (Burkholderia cepacia (strain R1808)).